The sequence spans 161 residues: Non-secretory ribonuclease (161 aa).

An N-terminal signal peptide occupies residues 1–27 (MVPKLFTSQICLLLLLGLLAVEGSLHV). The C-linked (Man) tryptophan glycan is linked to Trp34. His42 (proton acceptor) is an active-site residue. Asn44 is a glycosylation site (N-linked (GlcNAc...) asparagine). Cystine bridges form between Cys50–Cys110, Cys64–Cys123, Cys82–Cys138, and Cys89–Cys98. At Tyr60 the chain carries 3'-nitrotyrosine. 65–69 (KNQNT) is a binding site for substrate. Asn86, Asn92, Asn111, and Asn119 each carry an N-linked (GlcNAc...) asparagine glycan. His156 acts as the Proton donor in catalysis.

Belongs to the pancreatic ribonuclease family. As to quaternary structure, interacts with and forms a tight 1:1 complex with RNH1. Dimerization of two such complexes may occur.

The protein localises to the lysosome. Its subcellular location is the cytoplasmic granule. The catalysed reaction is an [RNA] containing cytidine + H2O = an [RNA]-3'-cytidine-3'-phosphate + a 5'-hydroxy-ribonucleotide-3'-[RNA].. It catalyses the reaction an [RNA] containing uridine + H2O = an [RNA]-3'-uridine-3'-phosphate + a 5'-hydroxy-ribonucleotide-3'-[RNA].. This is a non-secretory ribonuclease. It is a pyrimidine specific nuclease with a slight preference for U. Cytotoxin and helminthotoxin. Possesses a wide variety of biological activities. This is Non-secretory ribonuclease (RNASE2) from Gorilla gorilla gorilla (Western lowland gorilla).